The chain runs to 186 residues: Apolipophorin-3 (186 aa).

The first 18 residues, 1–18, serve as a signal peptide directing secretion; the sequence is MAAKYVFVVAACSALAQA. A propeptide spanning residues 19–23 is cleaved from the precursor; sequence GIVRR.

Belongs to the insect apolipophorin-3 family. Equilibrium between a soluble monomer and a bound lipoprotein form. Apolipophorin-3 associates with lipophorin during lipid loading until each particle contains 9 or 14 molecules of apolipophorin-3. Expressed in hemolymph. Also found in hemocytes and fat body.

The protein localises to the secreted. In terms of biological role, assists in the loading of diacylglycerol, generated from triacylglycerol stores in the fat body through the action of adipokinetic hormone, into lipophorin, the hemolymph lipoprotein. It increases the lipid carrying capacity of lipophorin by covering the expanding hydrophobic surface resulting from diacylglycerol uptake. It thus plays a critical role in the transport of lipids during flight in several species of insects. Has antibacterial activity against the Gram-positive bacteria L.monocytogenes (MIC=6.5 uM). Lacks antibacterial activity against the Gram-positive bacteria B.circulans, M.luteus, S.aureus, and S.lutea, and the Gram-negative bacteria E.coli D31, E.coli ATCC 25922, and S.typhimurium. Lacks antifungal activity against S.cerevisiae, P.pastoris, Z.marxianus, C.albicans, C.wickerhamii, A.niger, F.oxysporum, and T.harizianum. This chain is Apolipophorin-3, found in Galleria mellonella (Greater wax moth).